Reading from the N-terminus, the 320-residue chain is tRNA uridine(34) hydroxylase (320 aa).

The 95-residue stretch at 123-217 folds into the Rhodanese domain; sequence EDENTVILDA…YGKDPETKGL (95 aa). C177 functions as the Cysteine persulfide intermediate in the catalytic mechanism.

This sequence belongs to the TrhO family.

It catalyses the reaction uridine(34) in tRNA + AH2 + O2 = 5-hydroxyuridine(34) in tRNA + A + H2O. Its function is as follows. Catalyzes oxygen-dependent 5-hydroxyuridine (ho5U) modification at position 34 in tRNAs. In Staphylococcus epidermidis (strain ATCC 35984 / DSM 28319 / BCRC 17069 / CCUG 31568 / BM 3577 / RP62A), this protein is tRNA uridine(34) hydroxylase.